The following is a 36-amino-acid chain: Photosystem I reaction center subunit VIII (36 aa).

A helical transmembrane segment spans residues 6 to 28; sequence FPSVLVPLVGLVFPAMAMASLSL.

It belongs to the PsaI family.

It localises to the plastid. The protein localises to the chloroplast thylakoid membrane. Its function is as follows. May help in the organization of the PsaL subunit. This is Photosystem I reaction center subunit VIII from Panax ginseng (Korean ginseng).